The following is a 78-amino-acid chain: Large ribosomal subunit protein eL20 (78 aa).

The protein belongs to the eukaryotic ribosomal protein eL20 family. As to quaternary structure, part of the 50S ribosomal subunit. Binds 23S rRNA.

The sequence is that of Large ribosomal subunit protein eL20 from Pyrobaculum islandicum (strain DSM 4184 / JCM 9189 / GEO3).